We begin with the raw amino-acid sequence, 219 residues long: MSNLTLDVHTADGSTNGTVDLPSSVFDVEVSTPLLHQVVTAQLAARRQGTHATKTRGQVRGGGRKPYRQKGTGRARQGSIRAPQFTGGGTVHGPQPRDYDQRTPKKMKAAALRGALSDRARHDRIHVVEDLVPGQTPSTKAARTFIGRLTDRKSVLVVLGREDVNSIKSARNLPNVHILPSDQLNTYDVLNSDDLVFSVEALNAFIERATGAETKEESK.

The interval 45–103 is disordered; sequence ARRQGTHATKTRGQVRGGGRKPYRQKGTGRARQGSIRAPQFTGGGTVHGPQPRDYDQRT. Positions 62-73 are enriched in basic residues; that stretch reads GGRKPYRQKGTG.

Belongs to the universal ribosomal protein uL4 family. Part of the 50S ribosomal subunit.

One of the primary rRNA binding proteins, this protein initially binds near the 5'-end of the 23S rRNA. It is important during the early stages of 50S assembly. It makes multiple contacts with different domains of the 23S rRNA in the assembled 50S subunit and ribosome. Its function is as follows. Forms part of the polypeptide exit tunnel. This chain is Large ribosomal subunit protein uL4, found in Corynebacterium kroppenstedtii (strain DSM 44385 / JCM 11950 / CIP 105744 / CCUG 35717).